Consider the following 337-residue polypeptide: Mycothiol acetyltransferase (337 aa).

N-acetyltransferase domains are found at residues 11–151 (LDER…FELP) and 154–337 (VRLR…MYRK). Glutamate 37 provides a ligand contact to 1D-myo-inositol 2-(L-cysteinylamino)-2-deoxy-alpha-D-glucopyranoside. 81-83 (LVI) contributes to the acetyl-CoA binding site. A 1D-myo-inositol 2-(L-cysteinylamino)-2-deoxy-alpha-D-glucopyranoside-binding site is contributed by glutamate 182. The disordered stretch occupies residues 210 to 246 (RPTGSGDGDVADGGSTDGGPADSGSADGGAGEGGTGD). Residues 221–234 (DGGSTDGGPADSGS) show a composition bias toward low complexity. The span at 235–246 (ADGGAGEGGTGD) shows a compositional bias: gly residues. 2 residues coordinate 1D-myo-inositol 2-(L-cysteinylamino)-2-deoxy-alpha-D-glucopyranoside: lysine 257 and glutamate 271. Residues 275–277 (VGV) and 282–288 (QGGGLGR) each bind acetyl-CoA. 1D-myo-inositol 2-(L-cysteinylamino)-2-deoxy-alpha-D-glucopyranoside is bound at residue tyrosine 309. 314–319 (NTAAIR) serves as a coordination point for acetyl-CoA.

The protein belongs to the acetyltransferase family. MshD subfamily. Monomer.

It carries out the reaction 1D-myo-inositol 2-(L-cysteinylamino)-2-deoxy-alpha-D-glucopyranoside + acetyl-CoA = mycothiol + CoA + H(+). In terms of biological role, catalyzes the transfer of acetyl from acetyl-CoA to desacetylmycothiol (Cys-GlcN-Ins) to form mycothiol. In Streptosporangium roseum (strain ATCC 12428 / DSM 43021 / JCM 3005 / KCTC 9067 / NCIMB 10171 / NRRL 2505 / NI 9100), this protein is Mycothiol acetyltransferase.